The sequence spans 36 residues: MIIGMLRAHMITSLSPIPTMPSVNINKPKARFLYAI.

The protein is Protein YibY of Escherichia coli (strain K12).